Reading from the N-terminus, the 405-residue chain is Mucosal addressin cell adhesion molecule 1 (405 aa).

The N-terminal stretch at 1-21 (MESILALLLALALVPYQLSRG) is a signal peptide. 2 consecutive Ig-like domains span residues 22–109 (QSFQ…ILVY) and 110–227 (AFPD…TSPK). Topologically, residues 22–364 (QSFQVNPPES…PGQVTPNSSS (343 aa)) are extracellular. Intrachain disulfides connect Cys45-Cys91, Cys49-Cys95, and Cys132-Cys200. A mucin-like region spans residues 221–257 (QSQTSPKPPNTTSAEPYILTSSSTAEAVSTGLNITTL). N-linked (GlcNAc...) asparagine glycans are attached at residues Asn230 and Asn253. Positions 255–275 (TTLPSAPPYPKLSPRTLSSEG) are disordered. Positions 258 to 357 (PSAPPYPKLS…EVTNLYVPGQ (100 aa)) constitute an Ig-like 3 domain. A disulfide bridge links Cys293 with Cys341. The N-linked (GlcNAc...) asparagine glycan is linked to Asn361. A helical membrane pass occupies residues 365–385 (TVVLWIGSLVLGLLALVFLAY). Residues 386 to 405 (RLWKCYRPGPRPDTSSCTHL) lie on the Cytoplasmic side of the membrane.

In terms of assembly, homodimer. O-glycosylated; contains syalic acid. The Ser/Thr-rich mucin-like domain may provide possible sites for O-glycosylation. In terms of tissue distribution, highly expressed on high endothelial venules (HEV) of organized intestinal lymphoid tissues like the Peyer patches and mesenteric lymph nodes, and in the lamina propria of the intestine. Some expression found in the spleen, and low levels of expression in the peripheral lymph nodes and the lactating mammary gland. No expression was detected in the liver, kidneys, lungs or in normal brain. Expressed as well in brain endothelioma cells, and mucosal tissues which are in a chronic state of inflammation, such as inflamed pancreas.

The protein resides in the membrane. Its function is as follows. Cell adhesion leukocyte receptor expressed by mucosal venules, helps to direct lymphocyte traffic into mucosal tissues including the Peyer patches and the intestinal lamina propria. It can bind both the integrin alpha-4/beta-7 and L-selectin, regulating both the passage and retention of leukocytes. Both isoform 1 and isoform 2 can adhere to integrin alpha-4/beta-7. Isoform 2, lacking the mucin-like domain, may be specialized in supporting integrin alpha-4/beta-7-dependent adhesion strengthening, independent of L-selectin binding. The polypeptide is Mucosal addressin cell adhesion molecule 1 (Madcam1) (Mus musculus (Mouse)).